The chain runs to 421 residues: MLYLEDYLEMIEQLPMDLRDRFTEMREMDLQVQNAMDQLEQRVSEFFMNAKKNKPEWREEQMASIKKDYYKALEDADEKVQLANQIYDLVDRHLRKLDQELAKFKMELEADNAGITEILERRSLELDAPSQPVNNHHAHSHTPVEKRKYNPTSHHTATDHIPEKKFKSEALLSTLTSDASKENTLGCRNNNSTASCNNAYNVNSSQPLASYNIGSLSSGAGAGAITMAAAQAVQATAQMKEGRRTSSLKASYEAFKNNDFQLGKEFSMPRETAGYSSSSALMTTLTQNASSSAADSRSGRKSKNNTKSSSQQSSSSSSSSSSSSLSLCSSSSTVVQEVSQQTTVVPESDSNSQVDWTYDPNEPRYCICNQVSYGEMVGCDNQDCPIEWFHYGCVGLTEAPKGKWFCPQCTAAMKRRGSRHK.

A disordered region spans residues 129 to 164; it reads PSQPVNNHHAHSHTPVEKRKYNPTSHHTATDHIPEK. Glycyl lysine isopeptide (Lys-Gly) (interchain with G-Cter in SUMO2) cross-links involve residues K148, K165, and K167. K181 carries the post-translational modification N6-acetyllysine. K256 is covalently cross-linked (Glycyl lysine isopeptide (Lys-Gly) (interchain with G-Cter in SUMO2)). K264 is subject to N6-acetyllysine. The segment at 286-324 is disordered; it reads TQNASSSAADSRSGRKSKNNTKSSSQQSSSSSSSSSSSS. The span at 308–324 shows a compositional bias: low complexity; that stretch reads SSSQQSSSSSSSSSSSS. The PHD-type zinc finger occupies 363-412; sequence PRYCICNQVSYGEMVGCDNQDCPIEWFHYGCVGLTEAPKGKWFCPQCTAA. Zn(2+)-binding residues include C366, C368, C379, C384, H390, C393, C406, and C409.

The protein belongs to the ING family. In terms of assembly, interacts with H3K4me3 and to a lesser extent with H3K4me2. Component of the NuA4 histone acetyltransferase complex which contains the catalytic subunit KAT5/TIP60 and the subunits EP400, TRRAP/PAF400, BRD8/SMAP, EPC1, DMAP1/DNMAP1, RUVBL1/TIP49, RUVBL2, ING3, actin, ACTL6A/BAF53A, MORF4L1/MRG15, MORF4L2/MRGX, MRGBP, YEATS4/GAS41, VPS72/YL1 and MEAF6. The NuA4 complex interacts with MYC. HTATTIP/TIP60, EPC1, and ING3 together constitute a minimal HAT complex termed Piccolo NuA4. Component of a SWR1-like complex.

It localises to the nucleus. In terms of biological role, component of the NuA4 histone acetyltransferase (HAT) complex which is involved in transcriptional activation of select genes principally by acetylation of nucleosomal histones H4 and H2A. This modification may both alter nucleosome - DNA interactions and promote interaction of the modified histones with other proteins which positively regulate transcription. This complex may be required for the activation of transcriptional programs associated with oncogene and proto-oncogene mediated growth induction, tumor suppressor mediated growth arrest and replicative senescence, apoptosis, and DNA repair. NuA4 may also play a direct role in DNA repair when directly recruited to sites of DNA damage. Component of a SWR1-like complex that specifically mediates the removal of histone H2A.Z/H2AZ1 from the nucleosome. This Rattus norvegicus (Rat) protein is Inhibitor of growth protein 3 (Ing3).